Here is a 77-residue protein sequence, read N- to C-terminus: Large ribosomal subunit protein bL28 (77 aa).

The segment at 1–25 is disordered; the sequence is MARVCQVTGKAPMSGNNVSHANNKT.

Belongs to the bacterial ribosomal protein bL28 family.

The polypeptide is Large ribosomal subunit protein bL28 (Paraburkholderia phytofirmans (strain DSM 17436 / LMG 22146 / PsJN) (Burkholderia phytofirmans)).